The sequence spans 261 residues: Phosphonates import ATP-binding protein PhnC (261 aa).

The ABC transporter domain occupies 15-257; sequence LCLENTSAVY…LERSAIPPKR (243 aa). 48 to 55 lines the ATP pocket; that stretch reads GPSGSGKS.

It belongs to the ABC transporter superfamily. Phosphonates importer (TC 3.A.1.9.1) family. The complex is composed of two ATP-binding proteins (PhnC), two transmembrane proteins (PhnE) and a solute-binding protein (PhnD).

Its subcellular location is the cell inner membrane. It catalyses the reaction phosphonate(out) + ATP + H2O = phosphonate(in) + ADP + phosphate + H(+). Functionally, part of the ABC transporter complex PhnCDE involved in phosphonates import. Responsible for energy coupling to the transport system. The chain is Phosphonates import ATP-binding protein PhnC from Hyphomonas neptunium (strain ATCC 15444).